The primary structure comprises 421 residues: Probable acid phosphatase (421 aa).

The Proton donor role is filled by D229.

The catalysed reaction is a phosphate monoester + H2O = an alcohol + phosphate. This Kluyveromyces lactis (strain ATCC 8585 / CBS 2359 / DSM 70799 / NBRC 1267 / NRRL Y-1140 / WM37) (Yeast) protein is Probable acid phosphatase.